Reading from the N-terminus, the 426-residue chain is 10-deoxymethynolide desosaminyltransferase (426 aa).

Belongs to the glycosyltransferase 28 family. Forms a complex with DesVIII.

The catalysed reaction is 10-deoxymethynolide + dTDP-alpha-D-desosamine = 10-deoxymethymycin + dTDP + H(+). Its pathway is antibiotic biosynthesis. In terms of biological role, involved in the biosynthesis of the macrolide antibiotics methymycin, neomethymycin, narbomycin, and pikromycin. Catalyzes the attachment of dTDP-D-desosamine onto 12- and 14-membered macrolactone rings 10-deoxymethynolide and narbonolide to produce 10-deoxymethymycin (YC-17) and narbomycin. DesVII is unique among glycosyltransferases in that it requires an additional protein component, DesVIII, for its activity. DesVII can recognize and process not only cyclic substrates of different ring size, but also a variety of linear substrates albeit with reduced, but measurable activities. Both L-sugars and D-sugars are recognized as substrates and variant substitutions at C-3 and C-4 are tolerated, but deoxygenation at C-6 is required. In Streptomyces venezuelae, this protein is 10-deoxymethynolide desosaminyltransferase.